The chain runs to 1018 residues: Calcium-transporting ATPase sarcoplasmic/endoplasmic reticulum type (1018 aa).

The Cytoplasmic segment spans residues 1-48 (MEDGHSKTVDEVLSHFRVDPERGLSLDQVKEYQKKYGPNELPAEEGKT). The chain crosses the membrane as a helical span at residues 49 to 69 (LWQLVLEQFDDLLVKILLLAA). Topologically, residues 70 to 88 (IISFVLALFEEHEGVEAFV) are lumenal. The chain crosses the membrane as a helical span at residues 89-109 (EPFVILLILIANAVVGVWQER). At 110–252 (NAESAIEALK…EIKTPLQQKL (143 aa)) the chain is on the cytoplasmic side. Residues 253–272 (DEFGEQLSKVISLICVAVWA) form a helical membrane-spanning segment. Residues 273–294 (INIGHFNDPAHGGSWIKGAVYY) are Lumenal-facing. A helical transmembrane segment spans residues 295 to 312 (FKIAVALAVAAIPEGLPA). 4 residues coordinate Ca(2+): V303, A304, I306, and E308. The Cytoplasmic segment spans residues 313-756 (VITTCLALGT…EEGRAIYNNM (444 aa)). D350 functions as the 4-aspartylphosphate intermediate in the catalytic mechanism. 2 residues coordinate Mg(2+): D702 and D706. The helical transmembrane segment at 757–776 (KQFIRYLISSNIGEVVSIFL) threads the bilayer. Residues N767 and E770 each coordinate Ca(2+). The Lumenal segment spans residues 777 to 786 (TAALGLPEAL). Residues 787–807 (IPVQLLWVNLVTDGLPATALG) traverse the membrane as a helical segment. Ca(2+)-binding residues include N795, T798, and D799. Over 808–827 (FNPPDLDIMTKPPRKADEGL) the chain is Cytoplasmic. Residues 828 to 850 (ISGWLFFRYMAIGGYVGCATVGG) form a helical membrane-spanning segment. Over 851 to 896 (AAWWFMFSETGPQLSYWQLTHHLSCLGGGEEFKGIDCKIFNDPHPM) the chain is Lumenal. A helical transmembrane segment spans residues 897 to 916 (TMALSVLVTIEMLNAMNSLS). Position 907 (E907) interacts with Ca(2+). The Cytoplasmic portion of the chain corresponds to 917–929 (ENQSLVQMPPWCN). Residues 930-948 (IWLIASMCLSFALHFVILY) form a helical membrane-spanning segment. Topologically, residues 949–963 (VDVLSTVFQVTPLDG) are lumenal. The helical transmembrane segment at 964-984 (NEWMTVMKFSLPVVLLDEILK) threads the bilayer. Topologically, residues 985 to 1018 (FVARRISDGESYIKNMHGLVLAWAVFFAYIIWGP) are cytoplasmic.

Belongs to the cation transport ATPase (P-type) (TC 3.A.3) family.

The protein resides in the endoplasmic reticulum membrane. Its subcellular location is the sarcoplasmic reticulum membrane. The enzyme catalyses Ca(2+)(in) + ATP + H2O = Ca(2+)(out) + ADP + phosphate + H(+). This magnesium-dependent enzyme catalyzes the hydrolysis of ATP coupled with the transport of calcium. In Anopheles gambiae (African malaria mosquito), this protein is Calcium-transporting ATPase sarcoplasmic/endoplasmic reticulum type.